A 1429-amino-acid polypeptide reads, in one-letter code: uncharacterized protein (1429 aa).

Disordered regions lie at residues 1–76 and 103–130; these read MEGE…SGIE and PAGAAESAQNANLISSKSENVPEPAGEK. The span at 14-29 shows a compositional bias: low complexity; sequence SHSTSVVSERASSSGV. Over residues 109–121 the composition is skewed to polar residues; it reads SAQNANLISSKSE. The next 2 membrane-spanning stretches (helical) occupy residues 197 to 217 and 225 to 245; these read LTGQWWQSTSILLAVSILSWI and FFILFFIIITGTIVYGSCMIS. Positions 266–471 constitute an SMP-LTD domain; it reads DYETMSWFNT…WPNMFDYDLS (206 aa). 2 consecutive C2 domains span residues 462–584 and 738–858; these read WPNM…GDIY and TPVD…DRSA. The tract at residues 899–932 is disordered; sequence NTDNSSKQSSENVQSATDPTTPAKDNSTSNAETS. Residues 1060-1177 enclose the C2 3 domain; that stretch reads TYMPVPMTLN…EPNVESQQSI (118 aa). The tract at residues 1280 to 1303 is disordered; the sequence is EKNPSRSDLTTTQEASSSASVPPA. Residues 1294 to 1303 show a composition bias toward low complexity; the sequence is ASSSASVPPA.

The protein localises to the membrane. This is an uncharacterized protein from Schizosaccharomyces pombe (strain 972 / ATCC 24843) (Fission yeast).